The sequence spans 284 residues: Ribosomal RNA small subunit methyltransferase A (284 aa).

6 residues coordinate S-adenosyl-L-methionine: His-12, Leu-14, Gly-47, Glu-68, Asp-93, and Asn-118.

Belongs to the class I-like SAM-binding methyltransferase superfamily. rRNA adenine N(6)-methyltransferase family. RsmA subfamily.

The protein resides in the cytoplasm. It carries out the reaction adenosine(1518)/adenosine(1519) in 16S rRNA + 4 S-adenosyl-L-methionine = N(6)-dimethyladenosine(1518)/N(6)-dimethyladenosine(1519) in 16S rRNA + 4 S-adenosyl-L-homocysteine + 4 H(+). Specifically dimethylates two adjacent adenosines (A1518 and A1519) in the loop of a conserved hairpin near the 3'-end of 16S rRNA in the 30S particle. May play a critical role in biogenesis of 30S subunits. This chain is Ribosomal RNA small subunit methyltransferase A, found in Synechocystis sp. (strain ATCC 27184 / PCC 6803 / Kazusa).